Consider the following 493-residue polypeptide: Ketol-acid reductoisomerase (NADP(+)) (493 aa).

The region spanning 15 to 208 is the KARI N-terminal Rossmann domain; that stretch reads AQLGKCRFMQ…GGDRAGVLES (194 aa). NADP(+)-binding positions include 45–48, R68, R76, S78, and 108–110; these read CGAQ and DKQ. The active site involves H132. G158 is an NADP(+) binding site. 2 KARI C-terminal knotted domains span residues 209–344 and 345–486; these read SFVA…NALA and FAGK…MKDM. Mg(2+) contacts are provided by D217, E221, E389, and E393. Position 414 (S414) interacts with substrate.

The protein belongs to the ketol-acid reductoisomerase family. Mg(2+) is required as a cofactor.

The enzyme catalyses (2R)-2,3-dihydroxy-3-methylbutanoate + NADP(+) = (2S)-2-acetolactate + NADPH + H(+). The catalysed reaction is (2R,3R)-2,3-dihydroxy-3-methylpentanoate + NADP(+) = (S)-2-ethyl-2-hydroxy-3-oxobutanoate + NADPH + H(+). The protein operates within amino-acid biosynthesis; L-isoleucine biosynthesis; L-isoleucine from 2-oxobutanoate: step 2/4. Its pathway is amino-acid biosynthesis; L-valine biosynthesis; L-valine from pyruvate: step 2/4. Its function is as follows. Involved in the biosynthesis of branched-chain amino acids (BCAA). Catalyzes an alkyl-migration followed by a ketol-acid reduction of (S)-2-acetolactate (S2AL) to yield (R)-2,3-dihydroxy-isovalerate. In the isomerase reaction, S2AL is rearranged via a Mg-dependent methyl migration to produce 3-hydroxy-3-methyl-2-ketobutyrate (HMKB). In the reductase reaction, this 2-ketoacid undergoes a metal-dependent reduction by NADPH to yield (R)-2,3-dihydroxy-isovalerate. This chain is Ketol-acid reductoisomerase (NADP(+)), found in Aeromonas salmonicida (strain A449).